A 268-amino-acid polypeptide reads, in one-letter code: Undecaprenyl-diphosphatase (268 aa).

7 helical membrane-spanning segments follow: residues 47–67 (FAVLIQLGAILAILSIYFAKL), 83–103 (FVIGVLVAFLPAAMIGAVAGS), 109–129 (LFNPWVVCFSLIVGGAILLWV), 144–164 (FPLPMYFYIGCAQCLAMIPGV), 184–204 (AAEFSFFLAIPTMVGAFVYDF), 218–238 (IVAIGFVVSFITAVIVVKTFL), and 246–266 (FELFAWWRVIVGTLGLIALAM).

The protein belongs to the UppP family.

It localises to the cell inner membrane. The enzyme catalyses di-trans,octa-cis-undecaprenyl diphosphate + H2O = di-trans,octa-cis-undecaprenyl phosphate + phosphate + H(+). Catalyzes the dephosphorylation of undecaprenyl diphosphate (UPP). Confers resistance to bacitracin. This chain is Undecaprenyl-diphosphatase, found in Rhodopseudomonas palustris (strain BisB5).